The primary structure comprises 497 residues: IWS1-like protein (497 aa).

Positions 1–191 are disordered; that stretch reads MSDHEGASPA…SDRRGGRNFE (191 aa). 2 stretches are compositionally biased toward low complexity: residues 7-23 and 47-57; these read ASPASSAPSSPLVPVSP and PLAPRSPASPR. Basic and acidic residues-rich tracts occupy residues 123-134, 144-160, and 181-191; these read EGDKQQKRKDLF, DRPKKQNDDLDELVKGD, and PSDRRGGRNFE. The 81-residue stretch at 281–361 folds into the TFIIS N-terminal domain; sequence SALSEWLAPL…GEWARPIYHL (81 aa). The interval 369-433 is disordered; sequence SRQEREERDY…GDKGYINRAR (65 aa). Basic and acidic residues-rich tracts occupy residues 370–382 and 401–411; these read RQEREERDYSRMP and APKRPRIRDAE.

It belongs to the IWS1 family.

The protein localises to the nucleus. In Caenorhabditis briggsae, this protein is IWS1-like protein.